Reading from the N-terminus, the 523-residue chain is MVAPGLVLGLVLPLILWADRSAGIGFRFASYINNDMVLQKEPAGAVIWGFGTPGATVTVTLRQGQETIMKKVTSVKAHSDTWMVVLDPMKPGGPFEVMAQQTLEKINFTLRVHDVLFGDVWLCSGQSNMQMTVLQIFNATRELSNTAAYQSVRILSVSPIQAEQELEDLVAVDLQWSKPTSENLGHGYFKYMSAVCWLFGRHLYDTLQYPIGLIASSWGGTPIEAWSSGRSLKACGVPKQGSIPYDSVTGPSKHSVLWNAMIHPLCNMTLKGVVWYQGESNINYNTDLYNCTFPALIEDWRETFHRGSQGQTERFFPFGLVQLSSDLSKKSSDDGFPQIRWHQTADFGYVPNPKMPNTFMAVAMDLCDRDSPFGSIHPRDKQTVAYRLHLGARALAYGEKNLTFEGPLPEKIELLAHKGLLNLTYYQQIQVQKKDNKIFEISCCSDHRCKWLPASMNTVSTQSLTLAIDSCHGTVVALRYAWTTWPCEYKQCPLYHPSSALPAPPFIAFITDQGPGHQSNVAK.

An N-terminal signal peptide occupies residues 1 to 23 (MVAPGLVLGLVLPLILWADRSAG). Residues Asn107, Asn138, Asn267, Asn290, Asn401, and Asn422 are each glycosylated (N-linked (GlcNAc...) asparagine).

As to expression, widely expressed with high expression in the testis, prostate, and colon.

The protein resides in the lysosome. It localises to the cytoplasm. It carries out the reaction N-acetyl-9-O-acetylneuraminate + H2O = N-acetylneuraminate + acetate + H(+). The catalysed reaction is an Ac-O-9-sialoglycoconjugate + H2O = a sialoglycoconjugate + acetate + H(+). In terms of biological role, catalyzes the removal of O-acetyl ester groups from position 9 of the free diacetylated sialate N-acetyl-9-O-acetylneuraminate (Neu5,9Ac2) in the cytosol and of the diacetylated sialate residues of sialylglycoconjugates in the lysosomes. Together with the sialate-O-acetyltransferase they regulate the balance of acetylated sialoglycoconjugates, key players in various processes such as cell-cell interactions, host-pathogen recognition, and tumor antigenicity. In Homo sapiens (Human), this protein is Sialate O-acetylesterase (SIAE).